Reading from the N-terminus, the 520-residue chain is Aldehyde dehydrogenase 5, mitochondrial (520 aa).

A mitochondrion-targeting transit peptide spans 1-23; the sequence is MLSRTRAAAPNSRIFTRSLLRLY. Residue 266-271 participates in NAD(+) binding; the sequence is GSTATG. Residue E288 is the Proton acceptor of the active site. The Nucleophile role is filled by C322.

This sequence belongs to the aldehyde dehydrogenase family.

The protein resides in the mitochondrion matrix. The enzyme catalyses an aldehyde + NADP(+) + H2O = a carboxylate + NADPH + 2 H(+). The catalysed reaction is an aldehyde + NAD(+) + H2O = a carboxylate + NADH + 2 H(+). The protein operates within alcohol metabolism; ethanol degradation; acetate from ethanol: step 2/2. Its activity is regulated as follows. Induced by potassium ions. In terms of biological role, minor mitochondrial aldehyde dehydrogenase isoform. Plays a role in regulation or biosynthesis of electron transport chain components. Involved in the biosynthesis of acetate during anaerobic growth on glucose. This Saccharomyces cerevisiae (strain YJM789) (Baker's yeast) protein is Aldehyde dehydrogenase 5, mitochondrial (ALD5).